A 132-amino-acid polypeptide reads, in one-letter code: Agouti-signaling protein (132 aa).

Positions 1–22 are cleaved as a signal peptide; sequence MDVTRLLLATLLVFLCFFTAYS. Asn39 carries an N-linked (GlcNAc...) asparagine glycan. The tract at residues 62 to 88 is disordered; the sequence is ISRKEAEKKRSSKKEASMKKVARPRTP. Basic and acidic residues predominate over residues 63–79; it reads SRKEAEKKRSSKKEASM. 5 disulfides stabilise this stretch: Cys93–Cys108, Cys100–Cys114, Cys107–Cys125, Cys111–Cys132, and Cys116–Cys123. The Agouti domain maps to 93–132; the sequence is CVATRDSCKPPAPACCDPCASCQCRFFRSACSCRVLSLNC.

It is found in the secreted. Functionally, involved in the regulation of melanogenesis. The binding of ASP to MC1R precludes alpha-MSH initiated signaling and thus blocks production of cAMP, leading to a down-regulation of eumelanogenesis (brown/black pigment) and thus increasing synthesis of pheomelanin (yellow/red pigment). The sequence is that of Agouti-signaling protein (ASIP) from Chlorocebus aethiops (Green monkey).